A 205-amino-acid polypeptide reads, in one-letter code: G-protein coupled receptor (205 aa).

A run of 5 helical transmembrane segments spans residues 40-60 (GITLTASVPMIIIVITTMILY), 71-91 (FYVITLFASDFVLMWCVFFMT), 107-127 (LVYFIYHAVCSYSISMLAIIA), 151-171 (IGILLLASSMCAIPTALFVQI), and 185-205 (LSSPKAYELFLAVKIVFSFIW). An intrachain disulfide couples cysteine 105 to cysteine 181.

This sequence belongs to the G-protein coupled receptor 1 family.

The protein resides in the host membrane. The polypeptide is G-protein coupled receptor (U12) (Human herpesvirus 6B (strain Z29) (HHV-6 variant B)).